We begin with the raw amino-acid sequence, 504 residues long: Histidine ammonia-lyase (504 aa).

A cross-link (5-imidazolinone (Ala-Gly)) is located at residues 142–144 (ASG). Residue serine 143 is modified to 2,3-didehydroalanine (Ser).

This sequence belongs to the PAL/histidase family. Contains an active site 4-methylidene-imidazol-5-one (MIO), which is formed autocatalytically by cyclization and dehydration of residues Ala-Ser-Gly.

Its subcellular location is the cytoplasm. It carries out the reaction L-histidine = trans-urocanate + NH4(+). Its pathway is amino-acid degradation; L-histidine degradation into L-glutamate; N-formimidoyl-L-glutamate from L-histidine: step 1/3. This is Histidine ammonia-lyase from Staphylococcus aureus (strain USA300).